Reading from the N-terminus, the 396-residue chain is Elongation factor Tu (396 aa).

Residues 10–206 enclose the tr-type G domain; the sequence is KPHVNIGTIG…AVDESVPDPV (197 aa). Residues 19-26 are G1; it reads GHVDHGKT. Residue 19-26 coordinates GTP; sequence GHVDHGKT. T26 contributes to the Mg(2+) binding site. The segment at 62-66 is G2; sequence GITIN. A G3 region spans residues 83–86; it reads DAPG. Residues 83 to 87 and 138 to 141 each bind GTP; these read DAPGH and NKSD. A G4 region spans residues 138–141; it reads NKSD. The segment at 176–178 is G5; the sequence is SGL.

Belongs to the TRAFAC class translation factor GTPase superfamily. Classic translation factor GTPase family. EF-Tu/EF-1A subfamily. In terms of assembly, monomer.

The protein resides in the cytoplasm. It carries out the reaction GTP + H2O = GDP + phosphate + H(+). Its function is as follows. GTP hydrolase that promotes the GTP-dependent binding of aminoacyl-tRNA to the A-site of ribosomes during protein biosynthesis. The protein is Elongation factor Tu of Pseudarthrobacter chlorophenolicus (strain ATCC 700700 / DSM 12829 / CIP 107037 / JCM 12360 / KCTC 9906 / NCIMB 13794 / A6) (Arthrobacter chlorophenolicus).